The sequence spans 232 residues: Ubiquinone biosynthesis O-methyltransferase (232 aa).

The S-adenosyl-L-methionine site is built by Arg36, Gly55, Asp76, and Met120.

Belongs to the methyltransferase superfamily. UbiG/COQ3 family.

The enzyme catalyses a 3-demethylubiquinol + S-adenosyl-L-methionine = a ubiquinol + S-adenosyl-L-homocysteine + H(+). It carries out the reaction a 3-(all-trans-polyprenyl)benzene-1,2-diol + S-adenosyl-L-methionine = a 2-methoxy-6-(all-trans-polyprenyl)phenol + S-adenosyl-L-homocysteine + H(+). The protein operates within cofactor biosynthesis; ubiquinone biosynthesis. In terms of biological role, O-methyltransferase that catalyzes the 2 O-methylation steps in the ubiquinone biosynthetic pathway. The sequence is that of Ubiquinone biosynthesis O-methyltransferase from Burkholderia ambifaria (strain MC40-6).